Here is a 303-residue protein sequence, read N- to C-terminus: Hydroxyethylthiazole kinase (303 aa).

Polar residues predominate over residues 1 to 15 (MTTASTTPNSDTSNL). The disordered stretch occupies residues 1 to 23 (MTTASTTPNSDTSNLHEVAPDDP). Met67 is a binding site for substrate. ATP contacts are provided by Arg142 and Ser206. Substrate is bound at residue Gly233.

This sequence belongs to the Thz kinase family. Mg(2+) serves as cofactor.

The enzyme catalyses 5-(2-hydroxyethyl)-4-methylthiazole + ATP = 4-methyl-5-(2-phosphooxyethyl)-thiazole + ADP + H(+). The protein operates within cofactor biosynthesis; thiamine diphosphate biosynthesis; 4-methyl-5-(2-phosphoethyl)-thiazole from 5-(2-hydroxyethyl)-4-methylthiazole: step 1/1. In terms of biological role, catalyzes the phosphorylation of the hydroxyl group of 4-methyl-5-beta-hydroxyethylthiazole (THZ). This chain is Hydroxyethylthiazole kinase, found in Bifidobacterium animalis subsp. lactis (strain AD011).